Reading from the N-terminus, the 96-residue chain is MASSPVSRVVYNGKRSGGPRSPGAGSEIFTPAHEENVRFIYEAWQCVERDLRSQMGSERGLVEEYVEKMPNPSLKAFKPVDLSDLKRRNTQDAKKS.

Disordered regions lie at residues 1–28 (MASS…GSEI) and 76–96 (AFKP…AKKS). The PXDLS motif motif lies at 79 to 83 (PVDLS). The span at 81–96 (DLSDLKRRNTQDAKKS) shows a compositional bias: basic and acidic residues.

It belongs to the MCRIP family.

The protein resides in the nucleus. The protein localises to the cytoplasm. It localises to the stress granule. May play a role in the regulation of the epithelial-mesenchymal transition. The chain is Mapk-regulated corepressor-interacting protein 1 (MCRIP1) from Gallus gallus (Chicken).